Consider the following 78-residue polypeptide: Putative defensin-like protein 202 (78 aa).

The first 29 residues, 1–29 (MAKTQNFVCFTAVLLILILVSTEIPMIEG), serve as a signal peptide directing secretion. 3 cysteine pairs are disulfide-bonded: C44–C65, C49–C74, and C53–C76.

The protein belongs to the DEFL family.

It is found in the secreted. The protein is Putative defensin-like protein 202 of Arabidopsis thaliana (Mouse-ear cress).